The sequence spans 394 residues: Potassium channel subfamily K member 3 (394 aa).

Residues 1–8 lie on the Cytoplasmic side of the membrane; that stretch reads MKRQNVRT. A helical transmembrane segment spans residues 9–29; the sequence is LALIVCTFTYLLVGAAVFDAL. The N-linked (GlcNAc...) asparagine glycan is linked to Asn53. Positions 78–101 form an intramembrane region, pore-forming; sequence WRFAGSFYFAITVITTIGYGHAAP. K(+) is bound by residues Thr93, Ile94, Gly95, and Tyr96. The tract at residues 93–98 is selectivity filter 1; sequence TIGYGH. Residues 108-128 form a helical membrane-spanning segment; the sequence is VFCMFYALLGIPLTLVMFQSL. Over 129 to 158 the chain is Cytoplasmic; it reads GERINTLVRYLLHRAKKGLGMRRADVSMAN. The helical transmembrane segment at 159–179 threads the bilayer; the sequence is MVLIGFFSCISTLCIGAAAFS. Residues 184 to 207 constitute an intramembrane region (pore-forming); the sequence is WTFFQAYYYCFITLTTIGFGDYVA. Positions 199, 200, 201, and 202 each coordinate K(+). The selectivity filter 2 stretch occupies residues 199-204; that stretch reads TIGFGD. A helical transmembrane segment spans residues 223-243; sequence FSFVYILTGLTVIGAFLNLVV. Residues 243 to 248 form an X-gate region; it reads VLRFMT. Residues 244-394 lie on the Cytoplasmic side of the membrane; that stretch reads LRFMTMNAED…RGLMKRRSSV (151 aa). Disordered regions lie at residues 266–286 and 338–357; these read RNGQ…DTAS and TCVE…SDTP. Residues 269–278 are compositionally biased toward gly residues; that stretch reads QAGGGGGGGS.

The protein belongs to the two pore domain potassium channel (TC 1.A.1.8) family. Homodimer. Heterodimer with KCNK1. Heterodimer with KCNK9. Widespread expression in adult. Strongest expression in pancreas and placenta. Lower expression in brain, lung, prostate, heart, kidney, uterus, small intestine and colon.

The protein localises to the cell membrane. It carries out the reaction K(+)(in) = K(+)(out). It catalyses the reaction Na(+)(in) = Na(+)(out). Inhibited by external acidification, diacylglycerol and anandamide. Activated by halothane and isoflurane. Its function is as follows. K(+) channel that conducts voltage-dependent outward rectifying currents upon membrane depolarization. Voltage sensing is coupled to K(+) electrochemical gradient in an 'ion flux gating' mode where outward but not inward ion flow opens the gate. Changes ion selectivity and becomes permeable to Na(+) ions in response to extracellular acidification. Protonation of the pH sensor His-98 stabilizes C-type inactivation conformation likely converting the channel from outward K(+)-conducting, to inward Na(+)-conducting to nonconductive state. Homo- and heterodimerizes to form functional channels with distinct regulatory and gating properties. Allows K(+) currents with fast-gating kinetics important for the repolarization and hyperpolarization phases of action potentials. In cerebellar granule cells, heteromeric KCNK3:KCNK9 channel may hyperpolarize the resting membrane potential to limit intrinsic neuronal excitability, but once the action potential threshold is reached, it may support high-frequency action potential firing and increased neuronal excitability. Dispensable for central chemosensory respiration i.e. breathing controlled by brainstem CO2/pH, it rather conducts pH-sensitive currents and controls the firing rate of serotonergic raphe neurons involved in potentiation of the respiratory chemoreflex. Additionally, imparts chemosensitivity to type 1 cells in carotid bodies which respond to a decrease in arterial oxygen pressure or an increase in carbon dioxide pressure or pH to initiate adaptive changes in pulmonary ventilation. In adrenal gland, contributes to the maintenance of a hyperpolarized resting membrane potential of aldosterone-producing cells at zona glomerulosa and limits aldosterone release as part of a regulatory mechanism that controls arterial blood pressure and electrolyte homeostasis. In brown adipocytes, mediates K(+) efflux that counteracts norepinephrine-induced membrane depolarization, limits Ca(2+) efflux and downstream cAMP and PKA signaling, ultimately attenuating lipid oxidation and adaptive thermogenesis. In Homo sapiens (Human), this protein is Potassium channel subfamily K member 3.